A 481-amino-acid chain; its full sequence is Guanine nucleotide exchange factor C9orf72 homolog (481 aa).

Residues 23 to 194 (SPLLAATFAY…ELLASMRSHS (172 aa)) form the uDENN C9ORF72-type domain. Residues 200–343 (DIADTVLNDD…SELTAFWRAT (144 aa)) enclose the cDENN C9ORF72-type domain. The 95-residue stretch at 370–464 (VLHRDTLVKA…IKPGLHSFIF (95 aa)) folds into the dDENN C9ORF72-type domain. The required for the homodimerization of the C9orf72-SMCR8 complex stretch occupies residues 461-481 (SFIFGRPFYTSVQERDVLMTF).

Component of the C9orf72-SMCR8 complex, at least composed of C9orf72, SMCR8 and WDR41. The complex is formed of two protomers, each individually consisting of one molecule each of C9orf72, SMCR8 and WDR41. The protomers homodimerize via an interaction between C9orf72 (via C-terminus) and SMCR8 (via N-terminus). Within each protomer SMCR8 (via DENN domain) acts as a bridging protein between WDR41 (via C-terminus and N-terminus) and C9orf72 (via C-terminus). The C9orf72-SMCR8 complex associates with the ULK1/ATG1 kinase complex. Interacts with ULK1/ATG1 kinase complex members ULK1, ATG13 and RB1CC1. Interacts with SMCR8; the interaction is direct. Interacts with HNRNPA1, HNRNPA2B1 and UBQLN2. Interacts with small Rab GTPase RAB1A; the interaction mediates recruitment of RAB1A to the ULK1/ATG1 kinase complex. Also interacts with small Rab GTPase RAB7A. Interacts with cofilin. Interacts with GTP-binding proteins ARF1 and ARF6. Interacts with the DLG4/PSD-95. Interacts with CARM1 (via PH domain-like fold). Interacts with RAB39A and RAB39B (in GDP-bound forms); functions as GEF for RAB39A and RAB39B.

Its subcellular location is the nucleus. The protein localises to the cytoplasm. The protein resides in the P-body. It is found in the stress granule. It localises to the endosome. Its subcellular location is the lysosome. The protein localises to the cytoplasmic vesicle. The protein resides in the autophagosome. It is found in the autolysosome. It localises to the secreted. Its subcellular location is the cell projection. The protein localises to the axon. The protein resides in the growth cone. It is found in the perikaryon. In terms of biological role, acts as a guanine-nucleotide releasing factor (GEF) for Rab GTPases by promoting the conversion of inactive RAB-GDP to the active form RAB-GTP. Acts as a GEF for RAB39A which enables HOPS-mediated autophagosome-lysosome membrane tethering and fusion in mammalian autophagy. Component of the C9orf72-SMCR8 complex where both subunits display GEF activity and that regulates autophagy. As part of the C9orf72-SMCR8-WDR41 (CSW) complex, functions as GEF for RAB8A and RAB39B, thereby promoting autophagosome maturation. As part of the C9orf72-SMCR8 complex, also functions as GTPase activating protein (GAP) for RAB8A and RAB11A in vitro. The C9orf72-SMCR8 complex also acts as a regulator of autophagy initiation by interacting with the ULK1/ATG1 kinase complex and modulating its protein kinase activity. Promotes initiation of autophagy by regulating the RAB1A-dependent trafficking of the ULK1/ATG1 kinase complex to the phagophore which leads to autophagosome formation. Acts as a regulator of mTORC1 signaling by promoting phosphorylation of mTORC1 substrates. Plays a role in endosomal trafficking. May be involved in regulating the maturation of phagosomes to lysosomes. Promotes the lysosomal localization and lysosome-mediated degradation of CARM1 which leads to inhibition of starvation-induced lipid metabolism. Regulates actin dynamics in motor neurons by inhibiting the GTP-binding activity of ARF6, leading to ARF6 inactivation. This reduces the activity of the LIMK1 and LIMK2 kinases which are responsible for phosphorylation and inactivation of cofilin, leading to CFL1/cofilin activation. Positively regulates axon extension and axon growth cone size in spinal motor neurons. Required for SMCR8 protein expression and localization at pre- and post-synaptic compartments in the forebrain, also regulates protein abundance of RAB3A and GRIA1/GLUR1 in post-synaptic compartments in the forebrain and hippocampus. Plays a role within the hematopoietic system in restricting inflammation and the development of autoimmunity. The chain is Guanine nucleotide exchange factor C9orf72 homolog from Rattus norvegicus (Rat).